The primary structure comprises 155 residues: Nascent polypeptide-associated complex subunit beta (155 aa).

2 disordered regions span residues methionine 1 to aspartate 35 and leucine 116 to glutamate 155. Over residues threonine 20–lysine 30 the composition is skewed to basic residues. The region spanning glycine 33 to valine 98 is the NAC-A/B domain. The segment covering aspartate 136–glutamate 155 has biased composition (acidic residues).

This sequence belongs to the NAC-beta family. In terms of assembly, part of the nascent polypeptide-associated complex (NAC), consisting of egd2 and egd1. NAC associates with ribosomes via egd1.

The protein resides in the cytoplasm. The protein localises to the nucleus. In terms of biological role, component of the nascent polypeptide-associated complex (NAC), a dynamic component of the ribosomal exit tunnel, protecting the emerging polypeptides from interaction with other cytoplasmic proteins to ensure appropriate nascent protein targeting. The NAC complex also promotes mitochondrial protein import by enhancing productive ribosome interactions with the outer mitochondrial membrane and blocks the inappropriate interaction of ribosomes translating non-secretory nascent polypeptides with translocation sites in the membrane of the endoplasmic reticulum. EGD1 may act as a transcription factor that exert a negative effect on the expression of several genes that are transcribed by RNA polymerase II. The sequence is that of Nascent polypeptide-associated complex subunit beta (egd1) from Aspergillus niger (strain ATCC MYA-4892 / CBS 513.88 / FGSC A1513).